Consider the following 329-residue polypeptide: DNA-directed RNA polymerase subunit alpha (329 aa).

The tract at residues 1 to 234 (MQGSVTEFLK…EQLDAFVELR (234 aa)) is alpha N-terminal domain (alpha-NTD). Residues 248 to 329 (FDPILLRPVD…WPPASLADDL (82 aa)) are alpha C-terminal domain (alpha-CTD).

It belongs to the RNA polymerase alpha chain family. Homodimer. The RNAP catalytic core consists of 2 alpha, 1 beta, 1 beta' and 1 omega subunit. When a sigma factor is associated with the core the holoenzyme is formed, which can initiate transcription.

It carries out the reaction RNA(n) + a ribonucleoside 5'-triphosphate = RNA(n+1) + diphosphate. Its function is as follows. DNA-dependent RNA polymerase catalyzes the transcription of DNA into RNA using the four ribonucleoside triphosphates as substrates. This chain is DNA-directed RNA polymerase subunit alpha, found in Shewanella putrefaciens (strain CN-32 / ATCC BAA-453).